The following is a 248-amino-acid chain: Sulfur carrier protein FdhD (248 aa).

C99 acts as the Cysteine persulfide intermediate in catalysis. A Mo-bis(molybdopterin guanine dinucleotide)-binding site is contributed by 232–237; that stretch reads FVRGKR.

Belongs to the FdhD family.

The protein localises to the cytoplasm. Its function is as follows. Required for formate dehydrogenase (FDH) activity. Acts as a sulfur carrier protein that transfers sulfur from IscS to the molybdenum cofactor prior to its insertion into FDH. The sequence is that of Sulfur carrier protein FdhD from Methanothermobacter thermautotrophicus (strain ATCC 29096 / DSM 1053 / JCM 10044 / NBRC 100330 / Delta H) (Methanobacterium thermoautotrophicum).